The sequence spans 328 residues: Fructokinase-2 (328 aa).

This sequence belongs to the carbohydrate kinase PfkB family.

The enzyme catalyses D-fructose + ATP = D-fructose 6-phosphate + ADP + H(+). It participates in glycan biosynthesis; starch biosynthesis. Its function is as follows. May play an important role in maintaining the flux of carbon towards starch formation. The sequence is that of Fructokinase-2 (FRK2) from Solanum lycopersicum (Tomato).